Consider the following 298-residue polypeptide: 4-hydroxy-tetrahydrodipicolinate synthase (298 aa).

Threonine 48 serves as a coordination point for pyruvate. The active-site Proton donor/acceptor is tyrosine 137. Catalysis depends on lysine 166, which acts as the Schiff-base intermediate with substrate. Isoleucine 207 is a binding site for pyruvate.

The protein belongs to the DapA family. In terms of assembly, homotetramer; dimer of dimers.

It is found in the cytoplasm. It carries out the reaction L-aspartate 4-semialdehyde + pyruvate = (2S,4S)-4-hydroxy-2,3,4,5-tetrahydrodipicolinate + H2O + H(+). Its pathway is amino-acid biosynthesis; L-lysine biosynthesis via DAP pathway; (S)-tetrahydrodipicolinate from L-aspartate: step 3/4. In terms of biological role, catalyzes the condensation of (S)-aspartate-beta-semialdehyde [(S)-ASA] and pyruvate to 4-hydroxy-tetrahydrodipicolinate (HTPA). This is 4-hydroxy-tetrahydrodipicolinate synthase from Campylobacter jejuni subsp. jejuni serotype O:23/36 (strain 81-176).